The chain runs to 684 residues: MSAQDFLVELGTEELPPKALNTLAEAFLAGIEKGLQSAGLSFQAKHVYAAPRRLAVLITQLATQQPDRSINLDGPPRQAAFDAEGNPTQAALGFAKKCGVELSEIDQSGPKLRYSQSIKGKPTASLLPTIVEDSLNDLPIPKRMRWAARKEEFVRPTQWLVMLLGDEVIDCTILAQKAGRDSRGHRFHHPQSVRITAPANYLADLRAAYVLADANERRELISKRTAELATLQEGTAIVPADLLDEVTALVEWPVPLVCSFEERFLEVPQEALITTMQDNQKYFCLLDVDGKLLPRFITVANIESKDPRQIIEGNEKVVRPRLTDAEFFFKQDKKQKLEDFNLRLQNVVFQEKLGSVYDKAERISKLAAFIAPRIGGDAQRAARAGLLSKCDLATEMVGEFPEMQGIAGYYYALNDGEPEDVALALNEQYMPRGAGAELPSTVTGAAVAIADKLDTLVGIFGIGMLPTGSKDPYALRRAALGVLRILIEKKFDLDLNDAVAFAVSAFGSKVKAAGLADQVLEFIFDRLRARYEDEGVDVATYLSVRALKPGSALDFDQRVQAVQAFRKLPEAAALAAVNKRVSNLLSKIEGNVPTTIEAKYFDNANEFSLYSAIQQADQAVQPMAAARQYSETLARLAALREPVDAFFEAVMVNAEDAKVRANRYALLARLRGLFLGVADISVLS.

The protein belongs to the class-II aminoacyl-tRNA synthetase family. As to quaternary structure, tetramer of two alpha and two beta subunits.

It localises to the cytoplasm. The enzyme catalyses tRNA(Gly) + glycine + ATP = glycyl-tRNA(Gly) + AMP + diphosphate. In Pseudomonas fluorescens (strain ATCC BAA-477 / NRRL B-23932 / Pf-5), this protein is Glycine--tRNA ligase beta subunit.